Here is a 457-residue protein sequence, read N- to C-terminus: Polygalacturonase-2 (457 aa).

A signal peptide spans 1-24 (MVIQRNSILLLIIIFASSISTCRS). A propeptide spanning residues 25–71 (NVIDDNLFKQVYDNILEQEFAHDFQAYLSYLSKNIESNNNIDKVDKN) is cleaved from the precursor. N-linked (GlcNAc...) asparagine glycosylation is found at N189 and N240. PbH1 repeat units lie at residues 228–255 (SCTN…HVSN) and 256–277 (TQYI…SIVS). The active-site Proton donor is the D270. N-linked (GlcNAc...) asparagine glycosylation occurs at N286. H293 is an active-site residue. 2 PbH1 repeats span residues 309–330 (VSNV…RIKT) and 338–359 (ASNI…IIDQ). A glycan (N-linked (GlcNAc...) asparagine) is linked at N311. The propeptide occupies 445-457 (LEISEDEALLYNY).

The protein belongs to the glycosyl hydrolase 28 family. In terms of assembly, monomer PG2 (isoenzymes PG2A and PG2B). Also forms heterodimers called polygalacturonase 1 (PG1) with the beta subunit GP1. In terms of processing, N-glycosylated. PG2B isozyme has a greater degree of glycosylation than PG2A. Expressed only in ripening fruits (at protein level).

The protein resides in the secreted. It is found in the extracellular space. Its subcellular location is the apoplast. It localises to the cell wall. It carries out the reaction (1,4-alpha-D-galacturonosyl)n+m + H2O = (1,4-alpha-D-galacturonosyl)n + (1,4-alpha-D-galacturonosyl)m.. Its function is as follows. Catalytic subunit of the polygalacturonase isozyme 1 and 2 (PG1 and PG2). Acts in concert with the pectinesterase, in the ripening process. Is involved in cell wall metabolism, specifically in polyuronide degradation. The depolymerization and solubilization of cell wall polyuronides mediated by PG2 during ripening seems to be limited by the beta subunit GP1, probably by recruiting PG2 to form PG1. This Solanum lycopersicum (Tomato) protein is Polygalacturonase-2 (PG2).